The following is a 104-amino-acid chain: uncharacterized protein (104 aa).

This is an uncharacterized protein from Mycoplasma genitalium (strain ATCC 33530 / DSM 19775 / NCTC 10195 / G37) (Mycoplasmoides genitalium).